Consider the following 82-residue polypeptide: uncharacterized protein (82 aa).

The region spanning 1–82 (MKIHLIRHNT…HVESDIEIDL (82 aa)) is the 2Fe-2S ferredoxin-type domain. Residues Cys35, Cys40, Cys43, and Cys72 each contribute to the [2Fe-2S] cluster site.

[2Fe-2S] cluster is required as a cofactor.

This is an uncharacterized protein from Haemophilus influenzae (strain ATCC 51907 / DSM 11121 / KW20 / Rd).